The sequence spans 567 residues: Proline--tRNA ligase (567 aa).

It belongs to the class-II aminoacyl-tRNA synthetase family. ProS type 1 subfamily. Homodimer.

It is found in the cytoplasm. The catalysed reaction is tRNA(Pro) + L-proline + ATP = L-prolyl-tRNA(Pro) + AMP + diphosphate. Functionally, catalyzes the attachment of proline to tRNA(Pro) in a two-step reaction: proline is first activated by ATP to form Pro-AMP and then transferred to the acceptor end of tRNA(Pro). As ProRS can inadvertently accommodate and process non-cognate amino acids such as alanine and cysteine, to avoid such errors it has two additional distinct editing activities against alanine. One activity is designated as 'pretransfer' editing and involves the tRNA(Pro)-independent hydrolysis of activated Ala-AMP. The other activity is designated 'posttransfer' editing and involves deacylation of mischarged Ala-tRNA(Pro). The misacylated Cys-tRNA(Pro) is not edited by ProRS. This chain is Proline--tRNA ligase, found in Stenotrophomonas maltophilia (strain R551-3).